The following is a 344-amino-acid chain: S-adenosylmethionine:tRNA ribosyltransferase-isomerase (344 aa).

This sequence belongs to the QueA family. As to quaternary structure, monomer.

It is found in the cytoplasm. The enzyme catalyses 7-aminomethyl-7-carbaguanosine(34) in tRNA + S-adenosyl-L-methionine = epoxyqueuosine(34) in tRNA + adenine + L-methionine + 2 H(+). The protein operates within tRNA modification; tRNA-queuosine biosynthesis. In terms of biological role, transfers and isomerizes the ribose moiety from AdoMet to the 7-aminomethyl group of 7-deazaguanine (preQ1-tRNA) to give epoxyqueuosine (oQ-tRNA). The polypeptide is S-adenosylmethionine:tRNA ribosyltransferase-isomerase (Thiobacillus denitrificans (strain ATCC 25259 / T1)).